A 144-amino-acid polypeptide reads, in one-letter code: Probable disulfide formation protein (144 aa).

A helical membrane pass occupies residues 10-29 (WNLLLLTWLVALISTLSALF). Residues C39 and C42 are joined by a disulfide bond. A run of 2 helical transmembrane segments spans residues 44-63 (FQRA…CYRS) and 70-87 (YALP…VHTL). A disulfide bridge links C100 with C107. The helical transmembrane segment at 116–138 (GVVPLPALALFAFIIIAILLIII) threads the bilayer.

Belongs to the DsbB family. BdbC subfamily.

It localises to the cell inner membrane. Its function is as follows. Required for disulfide bond formation in some proteins. This is Probable disulfide formation protein from Metapseudomonas resinovorans (Pseudomonas resinovorans).